Here is a 503-residue protein sequence, read N- to C-terminus: Variant surface glycoprotein ILTAT 1.3 (503 aa).

Positions 1 to 29 (MTKAYENRMLLQALVLAAVLCTTHAEGTA) are cleaved as a signal peptide. Disulfide bonds link cysteine 42/cysteine 168 and cysteine 150/cysteine 206. Asparagine 419 and asparagine 432 each carry an N-linked (GlcNAc...) asparagine glycan. A lipid anchor (GPI-anchor amidated aspartate) is attached at aspartate 480. Residues 481-503 (SSFILNKQFALSVVSAAFAALLF) constitute a propeptide, removed in mature form.

The protein resides in the cell membrane. Its function is as follows. VSG forms a coat on the surface of the parasite. The trypanosome evades the immune response of the host by expressing a series of antigenically distinct VSGs from an estimated 1000 VSG genes. This Trypanosoma brucei brucei protein is Variant surface glycoprotein ILTAT 1.3.